A 257-amino-acid chain; its full sequence is 5-oxoprolinase subunit A (257 aa).

Belongs to the LamB/PxpA family. As to quaternary structure, forms a complex composed of PxpA, PxpB and PxpC.

The catalysed reaction is 5-oxo-L-proline + ATP + 2 H2O = L-glutamate + ADP + phosphate + H(+). In terms of biological role, catalyzes the cleavage of 5-oxoproline to form L-glutamate coupled to the hydrolysis of ATP to ADP and inorganic phosphate. This chain is 5-oxoprolinase subunit A, found in Oceanobacillus iheyensis (strain DSM 14371 / CIP 107618 / JCM 11309 / KCTC 3954 / HTE831).